The primary structure comprises 319 residues: tRNA uridine(34) hydroxylase (319 aa).

Positions 127-221 (KQEDTVIIDA…YGKDPEVQGE (95 aa)) constitute a Rhodanese domain. Residue Cys-181 is the Cysteine persulfide intermediate of the active site.

The protein belongs to the TrhO family.

The enzyme catalyses uridine(34) in tRNA + AH2 + O2 = 5-hydroxyuridine(34) in tRNA + A + H2O. Its function is as follows. Catalyzes oxygen-dependent 5-hydroxyuridine (ho5U) modification at position 34 in tRNAs. The polypeptide is tRNA uridine(34) hydroxylase (Bacillus cereus (strain ZK / E33L)).